The sequence spans 111 residues: Probable 4-amino-4-deoxy-L-arabinose-phosphoundecaprenol flippase subunit ArnE (111 aa).

At 1-35 (MIWLTLVFASLLSVAGQLCQKQATCFAAVNKRRKH) the chain is on the cytoplasmic side. The helical transmembrane segment at 36-56 (IVLWLGLALACLGLAMVLWLL) threads the bilayer. An EamA domain is found at 40-109 (LGLALACLGL…IIGGIVILGS (70 aa)). The Periplasmic portion of the chain corresponds to 57-60 (VLQN). Residues 61 to 81 (VPVGIAYPMLSLNFVWVTLAA) form a helical membrane-spanning segment. At 82 to 87 (VKLWHE) the chain is on the cytoplasmic side. A helical transmembrane segment spans residues 88–108 (PVSLRHWCGLAFIIGGIVILG). The Periplasmic portion of the chain corresponds to 109-111 (STV).

Belongs to the ArnE family. Heterodimer of ArnE and ArnF.

It is found in the cell inner membrane. Its pathway is bacterial outer membrane biogenesis; lipopolysaccharide biosynthesis. Its function is as follows. Translocates 4-amino-4-deoxy-L-arabinose-phosphoundecaprenol (alpha-L-Ara4N-phosphoundecaprenol) from the cytoplasmic to the periplasmic side of the inner membrane. In Escherichia coli O81 (strain ED1a), this protein is Probable 4-amino-4-deoxy-L-arabinose-phosphoundecaprenol flippase subunit ArnE.